The following is a 244-amino-acid chain: 14-3-3 protein beta/alpha-B (244 aa).

M1 carries the N-acetylmethionine modification.

This sequence belongs to the 14-3-3 family. Homodimer, and heterodimer with other family members.

Its subcellular location is the cytoplasm. Functionally, adapter protein implicated in the regulation of a large spectrum of both general and specialized signaling pathways. Binds to a large number of partners, usually by recognition of a phosphoserine or phosphothreonine motif. Binding generally results in the modulation of the activity of the binding partner. This chain is 14-3-3 protein beta/alpha-B (ywhab-b), found in Xenopus laevis (African clawed frog).